Here is a 466-residue protein sequence, read N- to C-terminus: Sulfate adenylyltransferase subunit 1 (466 aa).

One can recognise a tr-type G domain in the interval 22–237 (KELVRFLTCG…LNTIDVKTQE (216 aa)). The segment at 31–38 (GSVDDGKS) is G1. 31 to 38 (GSVDDGKS) contacts GTP. Residues 89-93 (GITID) are G2. Residues 110-113 (DTPG) form a G3 region. Residues 110 to 114 (DTPGH) and 165 to 168 (NKMD) contribute to the GTP site. Residues 165–168 (NKMD) are G4. The segment at 202 to 204 (SAL) is G5.

The protein belongs to the TRAFAC class translation factor GTPase superfamily. Classic translation factor GTPase family. CysN/NodQ subfamily. In terms of assembly, heterodimer composed of CysD, the smaller subunit, and CysN.

It catalyses the reaction sulfate + ATP + H(+) = adenosine 5'-phosphosulfate + diphosphate. Its pathway is sulfur metabolism; hydrogen sulfide biosynthesis; sulfite from sulfate: step 1/3. Functionally, with CysD forms the ATP sulfurylase (ATPS) that catalyzes the adenylation of sulfate producing adenosine 5'-phosphosulfate (APS) and diphosphate, the first enzymatic step in sulfur assimilation pathway. APS synthesis involves the formation of a high-energy phosphoric-sulfuric acid anhydride bond driven by GTP hydrolysis by CysN coupled to ATP hydrolysis by CysD. The protein is Sulfate adenylyltransferase subunit 1 of Colwellia psychrerythraea (strain 34H / ATCC BAA-681) (Vibrio psychroerythus).